We begin with the raw amino-acid sequence, 991 residues long: Ribonuclease TUDOR 1 (991 aa).

A2 is subject to N-acetylalanine. 4 consecutive TNase-like domains span residues 8 to 151 (QWLK…RWSK), 186 to 364 (KPME…MWAN), 378 to 557 (QNFT…IHSA), and 587 to 714 (RRIP…IWEN). The disordered stretch occupies residues 227-250 (RTTNGSVVETVPDEPNGDVSAESR). The 66-residue stretch at 782-847 (NPKRGDIVLA…RPIDPSVSAA (66 aa)) folds into the Tudor domain. At Y970 the chain carries Phosphotyrosine. Residues 971–991 (GDIESDDEDTGPARKPAGGRR) form a disordered region. Position 975 is a phosphoserine (S975). T980 is subject to Phosphothreonine.

As to expression, expressed in seeds, leaves, flowers, roots and siliques (at protein level). Accumulates in the cap and elongation zone of the root apices (at protein level).

The protein localises to the cytoplasm. Its subcellular location is the cytoplasmic granule. It localises to the perinuclear region. It is found in the endoplasmic reticulum. Its activity is regulated as follows. Repressed by the specific inhibitor 3',5'-deoxythymidine bisphosphate (pdTp); this RNase activity inhibition impairs subcellular relocation upon abiotic stress and leads to reduced stress resistance. Cytoprotective ribonuclease (RNase) required for resistance to abiotic stresses, acting as a positive regulator of mRNA decapping during stress. Essential for the integrity and function of cytoplasmic messenger ribonucleoprotein (mRNP) complexes called stress granules (SGs) and processing bodies (PBs), sites of post-transcriptional gene regulation during stress (e.g. salt and heat). Involved in gibberellic acid (GA) biosynthesis. Essential for stress tolerance, probably by regulating mRNAs entering the secretory pathway. Component of stress granules (SGs) that regulates growth under salt stress by modulating levels of GA20OX3 mRNA. Binds GA20OX3 mRNA. May inhibit the degradation of mRNAs involved in stress adaptation. This Arabidopsis thaliana (Mouse-ear cress) protein is Ribonuclease TUDOR 1.